The chain runs to 473 residues: Phenolic acid decarboxylase (473 aa).

Positions 160, 182, and 224 each coordinate Mn(2+). Prenylated FMN contacts are provided by residues 160-165 (NVGIYR) and 181-182 (QH). Glu273 serves as the catalytic Proton donor.

This sequence belongs to the UbiD family. YclC subfamily. Prenylated FMN serves as cofactor. The cofactor is Mn(2+).

It carries out the reaction 4-hydroxybenzoate + H(+) = phenol + CO2. It catalyses the reaction vanillate + H(+) = guaiacol + CO2. Functionally, involved in the non-oxidative decarboxylation and detoxification of phenolic derivatives under both aerobic and anaerobic conditions. Phenolic acid decarboxylase that catalyzes the reversible decarboxylation of 4-hydroxybenzoate and vanillate. Could also catalyze the decarboxylation of salicylate. Is not active on di- and tri-hydroxybenzoate derivatives. The polypeptide is Phenolic acid decarboxylase (Bacillus subtilis (strain 168)).